Reading from the N-terminus, the 82-residue chain is Small ribosomal subunit protein bS16 (82 aa).

This sequence belongs to the bacterial ribosomal protein bS16 family.

The polypeptide is Small ribosomal subunit protein bS16 (Klebsiella pneumoniae subsp. pneumoniae (strain ATCC 700721 / MGH 78578)).